A 208-amino-acid polypeptide reads, in one-letter code: 2-phospho-L-lactate guanylyltransferase (208 aa).

Belongs to the CofC family. Homodimer.

The catalysed reaction is (2S)-2-phospholactate + GTP + H(+) = (2S)-lactyl-2-diphospho-5'-guanosine + diphosphate. It functions in the pathway cofactor biosynthesis; coenzyme F420 biosynthesis. Its function is as follows. Guanylyltransferase that catalyzes the activation of (2S)-2-phospholactate (2-PL) as (2S)-lactyl-2-diphospho-5'-guanosine, via the condensation of 2-PL with GTP. It is involved in the biosynthesis of coenzyme F420, a hydride carrier cofactor. The protein is 2-phospho-L-lactate guanylyltransferase of Methanosarcina barkeri (strain Fusaro / DSM 804).